Reading from the N-terminus, the 393-residue chain is NAD(P)H-quinone oxidoreductase subunit H, chloroplastic (393 aa).

Belongs to the complex I 49 kDa subunit family. NDH is composed of at least 16 different subunits, 5 of which are encoded in the nucleus.

The protein localises to the plastid. Its subcellular location is the chloroplast thylakoid membrane. It carries out the reaction a plastoquinone + NADH + (n+1) H(+)(in) = a plastoquinol + NAD(+) + n H(+)(out). The catalysed reaction is a plastoquinone + NADPH + (n+1) H(+)(in) = a plastoquinol + NADP(+) + n H(+)(out). In terms of biological role, NDH shuttles electrons from NAD(P)H:plastoquinone, via FMN and iron-sulfur (Fe-S) centers, to quinones in the photosynthetic chain and possibly in a chloroplast respiratory chain. The immediate electron acceptor for the enzyme in this species is believed to be plastoquinone. Couples the redox reaction to proton translocation, and thus conserves the redox energy in a proton gradient. The protein is NAD(P)H-quinone oxidoreductase subunit H, chloroplastic of Vitis vinifera (Grape).